A 546-amino-acid polypeptide reads, in one-letter code: EH domain-containing protein 2 (546 aa).

2 consecutive EF-hand domains span residues 15 to 50 (EHQK…SKLS) and 51 to 84 (RQEL…VSLA). An EH domain is found at 16–94 (HQKIYKEWFN…QEGHEITSDL (79 aa)). Positions 28, 30, 32, 34, 39, 62, and 73 each coordinate Ca(2+). One can recognise a Dynamin-type G domain in the interval 194–430 (FDAKPMVMLL…LLADLMDVPK (237 aa)). The G1 motif stretch occupies residues 204-211 (GQYSTGKT). A GTP-binding site is contributed by 204 to 211 (GQYSTGKT). The segment at 230–231 (EP) is G2 motif. The interval 292–295 (DTPG) is G3 motif. GTP is bound by residues 292–296 (DTPGV) and Lys-359. Residues 358–361 (NKAD) are G4 motif. Residue Val-382 is a region of interest, G5 motif. Residue 395 to 398 (SFND) participates in GTP binding. The short motif at 429 to 436 (PKKACDRK) is the Nuclear localization signal element. Residues 467–490 (KSKAQQRLMDNLEEEFGKVQREFH) adopt a coiled-coil conformation.

This sequence belongs to the TRAFAC class dynamin-like GTPase superfamily. Dynamin/Fzo/YdjA family. EHD subfamily. As to quaternary structure, homooligomer, and heterooligomer with EHD1. Interacts with AP-4 complex subunit sigma (At2g19790).

It localises to the endosome membrane. Its subcellular location is the cell membrane. It is found in the nucleus. The protein resides in the cytoplasm. It carries out the reaction GTP + H2O = GDP + phosphate + H(+). Involved in endocytosis negative regulation, probably by influencing actin organization. Acts in early endocytic membrane fusion and membrane trafficking of recycling endosomes. Exhibits an inhibitory effect on endocytosis when over-expressed. The chain is EH domain-containing protein 2 from Arabidopsis thaliana (Mouse-ear cress).